Consider the following 459-residue polypeptide: MFS-type transporter SLC18B1 (459 aa).

N-acetylmethionine is present on M1. The segment covering 1-10 (MDEAGSPAPA) has biased composition (low complexity). Positions 1 to 27 (MDEAGSPAPAGTGGGDDPGGSTRETSR) are disordered. At 1-33 (MDEAGSPAPAGTGGGDDPGGSTRETSRRLSREQ) the chain is on the cytoplasmic side. Phosphoserine is present on S21. A helical transmembrane segment spans residues 34-54 (IFVLVSAASMNLGCMMTYSIL). Residues 55–70 (GPFFPKEAEKKGASNT) lie on the Extracellular side of the membrane. Residues 71 to 91 (MIGMIFGCYALFELLASLVFG) form a helical membrane-spanning segment. Topologically, residues 92 to 100 (KYLVHIGAK) are cytoplasmic. A helical membrane pass occupies residues 101–121 (FMFIAGMFVSGGVTILFGVLD). At 122 to 127 (QLPEGP) the chain is on the extracellular side. A helical transmembrane segment spans residues 128 to 148 (IFIAMCFLVRIVDAIGFGAAI). Topologically, residues 149-167 (TASSSILAKAFPNNVATVM) are cytoplasmic. Residues 168–188 (GSLEVFSGLGLVAGPPLGGLL) form a helical membrane-spanning segment. The Extracellular segment spans residues 189–195 (YQSFGYE). The helical transmembrane segment at 196–216 (VPFIFLGCIVLLMIPLNLYIL) threads the bilayer. Topologically, residues 217–235 (PSYAQESDPGKQSFWKLVT) are cytoplasmic. A helical transmembrane segment spans residues 236–256 (LPKMGLLAFVIISLSSCFGFL). Residues 257–274 (DPTLSLFVMEKFSLSTGY) lie on the Extracellular side of the membrane. A helical membrane pass occupies residues 275 to 295 (VGLVFLGLSLSYAISSPLFGL). The Cytoplasmic portion of the chain corresponds to 296–306 (LSDKMPTLRKW). The chain crosses the membrane as a helical span at residues 307-327 (LLVFGNLITAGCYMLLGPVPL). Over 328–333 (LHIKSQ) the chain is Extracellular. Residues 334 to 354 (LWLLVLVLVVNGISAGMSIIP) traverse the membrane as a helical segment. At 355–379 (TFPEMLSCAYANGFEDSISTLGLVS) the chain is on the cytoplasmic side. A helical transmembrane segment spans residues 380 to 400 (GLFGAMWSVGAFMGPILGGFL). Residues 401–409 (CEKIGFEWA) are Extracellular-facing. A helical transmembrane segment spans residues 410–430 (AAMQGLWTLLSGVSMALFYLW). Residues 431-459 (EDSTARRRSKAQNSLGTEEERAALLPNDT) are Cytoplasmic-facing. Residues 440-459 (KAQNSLGTEEERAALLPNDT) are disordered.

Belongs to the major facilitator superfamily. As to expression, widely expressed, with highest expression in the lung, pancreas and kidney. High expression in the CNS, particularly in the hypothalamus, the thalamus and the cerebellum. In the forebrain, abundantly expressed in the telencephalon, especially in the cerebral cortex layers, except layer 1, as well as in the induseum griseum, the piriform area, the taenia tecta, dorsal part and in the entorhinal area, lateral part. Lower levels in the bed anterior olfactory nucleus, posteroventral part and in layer two of the olfactory tubercle. In the amygdala, high levels observed in the intercalated nucleus and the medial nucleus. In the diencephalon, expressed in the nuclei in both the hypothalamus and thalamus. Among the hypothalamic areas, strongest expression in the arcuate nucleus and in the ventromedial nucleus, as well as in the suprachiasmatic nucleus, anterior nucleus, especially in its central part, and in the magnocellular division of the paraventricular nucleus. In the thalamus, highest levels in the medial habenula. Expression also observed in the paraventricular thalamic nucleus, parataenial nucleus, central medial nucleus, intermediodorsal nucleus and lateral dorsal nucleus. In the hindbrain, detected in the cerebellum and in the pons. In the midbrain and the medulla, expression levels were modest. In the midbrain, highest expression in the periaqueductal gray and all subdivisions of the interpeduncular nucleus, except for the caudal part. In the pons, the strongest labeling was seen in the nucleus incertus and in the tegmental nucleus. Expressed in bone marrow-derived mast cells (at protein level).

The protein localises to the cytoplasmic vesicle. Its subcellular location is the secretory vesicle membrane. It localises to the secretory vesicle. The protein resides in the synaptic vesicle membrane. The catalysed reaction is spermine(in) + n H(+)(out) = spermine(out) + n H(+)(in). It catalyses the reaction spermidine(in) + n H(+)(out) = spermidine(out) + n H(+)(in). It carries out the reaction serotonin(in) + n H(+)(out) = serotonin(out) + n H(+)(in). In terms of biological role, proton-coupled polyamine antiporter involved in the translocation of polyamines from cytosol into secretory vesicles prior to their release via exocytosis. Uses the electrochemical proton gradient generated by a V-type proton-pumping ATPase to couple the efflux of protons with the uptake of a polyamine molecule. Facilitates vesicular storage of spermine and spermidine in astrocytes with an impact on glutamatergic neuronal transmission and memory formation. Upon antigen stimulation, regulates polyamine accumulation and release in mast cell secretory granules, which in turn potentiates mast cell degranulation and histamine secretion. The polypeptide is MFS-type transporter SLC18B1 (Mus musculus (Mouse)).